The following is a 269-amino-acid chain: Protein tsct-1 (269 aa).

It belongs to the TSC-22/Dip/Bun family.

This chain is Protein tsct-1, found in Caenorhabditis elegans.